We begin with the raw amino-acid sequence, 152 residues long: Large ribosomal subunit protein bL9 (152 aa).

The protein belongs to the bacterial ribosomal protein bL9 family.

Its function is as follows. Binds to the 23S rRNA. The protein is Large ribosomal subunit protein bL9 of Synechococcus sp. (strain CC9311).